Reading from the N-terminus, the 389-residue chain is Chalcone synthase 4 (389 aa).

The active site involves Cys164.

The protein belongs to the thiolase-like superfamily. Chalcone/stilbene synthases family.

The enzyme catalyses (E)-4-coumaroyl-CoA + 3 malonyl-CoA + 3 H(+) = 2',4,4',6'-tetrahydroxychalcone + 3 CO2 + 4 CoA. It participates in secondary metabolite biosynthesis; flavonoid biosynthesis. Functionally, the primary product of this enzyme is 4,2',4',6'-tetrahydroxychalcone (also termed naringenin-chalcone or chalcone) which can under specific conditions spontaneously isomerize into naringenin. This Pisum sativum (Garden pea) protein is Chalcone synthase 4 (CHS4).